A 189-amino-acid chain; its full sequence is Tumor protein p53-inducible protein 11 (189 aa).

Residues 1 to 63 (MAAKQPPPLM…FAVREPLGLR (63 aa)) are Cytoplasmic-facing. Phosphoserine is present on Ser14. Residues 64 to 84 (VWQFLSAMLFSSVAIMALALP) traverse the membrane as a helical segment. Residues 85–108 (DQLYDAVFDGAEVTSKTPIRLYGG) are Extracellular-facing. Residues 109–129 (ALLSISLIMWNALYTAEKVII) traverse the membrane as a helical segment. Position 130 (Arg130) is a topological domain, cytoplasmic. Residues 131–151 (WTLLTEACYFGVQSLVVTATL) traverse the membrane as a helical segment. Over 152 to 155 (AETG) the chain is Extracellular. The helical transmembrane segment at 156–176 (LMSLGTLLLLASRLLFVIVSI) threads the bilayer. Topologically, residues 177 to 189 (YYYYQVGRKPKKV) are cytoplasmic.

It localises to the membrane. In Rattus norvegicus (Rat), this protein is Tumor protein p53-inducible protein 11 (Tp53i11).